Here is a 1997-residue protein sequence, read N- to C-terminus: Autophagy-related protein 2 homolog A (1997 aa).

Residues 17–119 enclose the Chorein N-terminal domain; that stretch reads CRYLLQHYLG…RGAAQGTESQ (103 aa). 5 disordered regions span residues 241-281, 1292-1323, 1371-1414, 1492-1534, and 1684-1718; these read TSVQ…IQQI, HCPPKPEPPTEIAGQKLQPPEGPSSLPPCLPA, EEIK…TDTD, SSRP…TQGG, and RLDGPAKSSSDCELEQETSQGSTEDETMSPSSSTD. Residues 1311–1321 show a composition bias toward pro residues; the sequence is PEGPSSLPPCL. 3 stretches are compositionally biased toward polar residues: residues 1393 to 1408, 1493 to 1532, and 1690 to 1718; these read RVSQESLGLSDTSGDS, SRPNSARAQSPRSRTSFHNARGSPSRSSVTNRPQNTWRTQ, and KSSSDCELEQETSQGSTEDETMSPSSSTD.

This sequence belongs to the ATG2 family.

Its subcellular location is the preautophagosomal structure membrane. The protein resides in the lipid droplet. It is found in the endoplasmic reticulum membrane. The catalysed reaction is a 1,2-diacyl-sn-glycero-3-phospho-L-serine(in) = a 1,2-diacyl-sn-glycero-3-phospho-L-serine(out). It catalyses the reaction a 1,2-diacyl-sn-glycero-3-phosphoethanolamine(in) = a 1,2-diacyl-sn-glycero-3-phosphoethanolamine(out). In terms of biological role, lipid transfer protein involved in autophagosome assembly. Tethers the edge of the isolation membrane (IM) to the endoplasmic reticulum (ER) and mediates direct lipid transfer from ER to IM for IM expansion. Binds to the ER exit site (ERES), which is the membrane source for autophagosome formation, and extracts phospholipids from the membrane source and transfers them to atg9 (atg9a or atg9b) to the IM for membrane expansion. Also regulates lipid droplets morphology and distribution within the cell. The sequence is that of Autophagy-related protein 2 homolog A from Xenopus tropicalis (Western clawed frog).